The following is a 324-amino-acid chain: tRNA uridine(34) hydroxylase (324 aa).

In terms of domain architecture, Rhodanese spans 145 to 239 (NDKKTIFIDM…YVHDARKNGL (95 aa)). Cysteine 199 functions as the Cysteine persulfide intermediate in the catalytic mechanism.

This sequence belongs to the TrhO family.

It catalyses the reaction uridine(34) in tRNA + AH2 + O2 = 5-hydroxyuridine(34) in tRNA + A + H2O. Its function is as follows. Catalyzes oxygen-dependent 5-hydroxyuridine (ho5U) modification at position 34 in tRNAs. The polypeptide is tRNA uridine(34) hydroxylase (Buchnera aphidicola subsp. Acyrthosiphon pisum (strain APS) (Acyrthosiphon pisum symbiotic bacterium)).